A 304-amino-acid chain; its full sequence is Glycine--tRNA ligase alpha subunit (304 aa).

It belongs to the class-II aminoacyl-tRNA synthetase family. As to quaternary structure, tetramer of two alpha and two beta subunits.

It is found in the cytoplasm. It catalyses the reaction tRNA(Gly) + glycine + ATP = glycyl-tRNA(Gly) + AMP + diphosphate. The protein is Glycine--tRNA ligase alpha subunit of Streptococcus agalactiae serotype Ia (strain ATCC 27591 / A909 / CDC SS700).